The following is an 811-amino-acid chain: Ribonucleoside-diphosphate reductase large chain (811 aa).

The 92-residue stretch at methionine 1 to lysine 92 folds into the ATP-cone domain. ATP contacts are provided by residues lysine 5–arginine 6, glutamate 11–lysine 17, threonine 53, and aspartate 57. 2 residues coordinate GDP: serine 202 and serine 217. An intrachain disulfide couples cysteine 218 to cysteine 444. DTTP-binding positions include aspartate 226 to isoleucine 228, lysine 243, arginine 256, and alanine 263 to glycine 264. Residue asparagine 427 participates in GDP binding. Asparagine 427 (proton acceptor) is an active-site residue. The active-site Cysteine radical intermediate is the cysteine 429. GDP is bound by residues glutamate 431 and threonine 603–threonine 606. The active-site Proton acceptor is glutamate 431.

The protein belongs to the ribonucleoside diphosphate reductase large chain family. As to quaternary structure, heterodimer of a large and a small subunit. Interacts with SPD1.

The catalysed reaction is a 2'-deoxyribonucleoside 5'-diphosphate + [thioredoxin]-disulfide + H2O = a ribonucleoside 5'-diphosphate + [thioredoxin]-dithiol. Its activity is regulated as follows. Under complex allosteric control mediated by deoxynucleoside triphosphates and ATP binding to separate specificity and activation sites on the large subunit. The type of nucleotide bound at the specificity site determines substrate preference. It seems probable that ATP makes the enzyme reduce CDP and UDP, dGTP favors ADP reduction and dTTP favors GDP reduction. Stimulated by ATP and inhibited by dATP binding to the activity site. In terms of biological role, provides the precursors necessary for DNA synthesis. Catalyzes the biosynthesis of deoxyribonucleotides from the corresponding ribonucleotides. The chain is Ribonucleoside-diphosphate reductase large chain (cdc22) from Schizosaccharomyces pombe (strain 972 / ATCC 24843) (Fission yeast).